The following is a 137-amino-acid chain: Nucleoside diphosphate kinase (137 aa).

Positions 10, 58, 86, 92, 103, and 113 each coordinate ATP. The Pros-phosphohistidine intermediate role is filled by histidine 116.

Belongs to the NDK family. Homotetramer. Mg(2+) is required as a cofactor.

The protein localises to the cytoplasm. It catalyses the reaction a 2'-deoxyribonucleoside 5'-diphosphate + ATP = a 2'-deoxyribonucleoside 5'-triphosphate + ADP. The enzyme catalyses a ribonucleoside 5'-diphosphate + ATP = a ribonucleoside 5'-triphosphate + ADP. Functionally, major role in the synthesis of nucleoside triphosphates other than ATP. The ATP gamma phosphate is transferred to the NDP beta phosphate via a ping-pong mechanism, using a phosphorylated active-site intermediate. In Helicobacter pylori (strain P12), this protein is Nucleoside diphosphate kinase.